A 348-amino-acid polypeptide reads, in one-letter code: Protein RecA (348 aa).

66–73 is an ATP binding site; it reads GPESSGKT.

The protein belongs to the RecA family.

The protein resides in the cytoplasm. Functionally, can catalyze the hydrolysis of ATP in the presence of single-stranded DNA, the ATP-dependent uptake of single-stranded DNA by duplex DNA, and the ATP-dependent hybridization of homologous single-stranded DNAs. It interacts with LexA causing its activation and leading to its autocatalytic cleavage. This is Protein RecA from Neisseria gonorrhoeae (strain NCCP11945).